Here is a 599-residue protein sequence, read N- to C-terminus: Sulfite reductase [NADPH] flavoprotein alpha-component (599 aa).

In terms of domain architecture, Flavodoxin-like spans 64–202 (ITIISASQTG…AASEWRARVV (139 aa)). Residues 70 to 75 (SQTGNA), 117 to 120 (STQG), and 153 to 162 (LGDSSYEFFC) contribute to the FMN site. Residues 234–448 (DSPLVASLSV…IEHNDNFRLP (215 aa)) form the FAD-binding FR-type domain. Residues T322, A356, 386–389 (RLYS), 404–406 (TVG), Y410, and 419–422 (GGAS) each bind FAD. NADP(+) contacts are provided by residues 519–520 (SR), 525–529 (KVYVQ), and D561. Y599 provides a ligand contact to FAD.

Belongs to the NADPH-dependent sulphite reductase flavoprotein subunit CysJ family. This sequence in the N-terminal section; belongs to the flavodoxin family. It in the C-terminal section; belongs to the flavoprotein pyridine nucleotide cytochrome reductase family. As to quaternary structure, alpha(8)-beta(8). The alpha component is a flavoprotein, the beta component is a hemoprotein. The cofactor is FAD. Requires FMN as cofactor.

It catalyses the reaction hydrogen sulfide + 3 NADP(+) + 3 H2O = sulfite + 3 NADPH + 4 H(+). It functions in the pathway sulfur metabolism; hydrogen sulfide biosynthesis; hydrogen sulfide from sulfite (NADPH route): step 1/1. In terms of biological role, component of the sulfite reductase complex that catalyzes the 6-electron reduction of sulfite to sulfide. This is one of several activities required for the biosynthesis of L-cysteine from sulfate. The flavoprotein component catalyzes the electron flow from NADPH -&gt; FAD -&gt; FMN to the hemoprotein component. The protein is Sulfite reductase [NADPH] flavoprotein alpha-component of Escherichia coli O9:H4 (strain HS).